The following is a 765-amino-acid chain: Lysyl oxidase homolog 2 (765 aa).

Positions 1–19 are cleaved as a signal peptide; the sequence is MLVSHVFLLTLSLSVPSLG. SRCR domains lie at 49 to 150, 179 to 293, 317 to 416, and 426 to 535; these read VRLA…VQCS, IRPI…VSCT, VRLR…VRCN, and VRLS…VSCV. Intrachain disulfides connect C75-C139, C88-C149, C119-C129, C209-C282, C222-C292, C256-C266, C342-C405, C355-C415, and C386-C396. Residue N279 is glycosylated (N-linked (GlcNAc...) asparagine). N446 is a glycosylation site (N-linked (GlcNAc...) asparagine). Cystine bridges form between C455/C521, C468/C534, and C502/C512. Positions 539–742 are lysyl-oxidase like; that stretch reads PDLVLNAALV…WMYNCHIGGS (204 aa). Ca(2+) is bound by residues D540 and L541. Disulfide bonds link C564–C616, C570–C686, C648–C664, and C654–C676. 3 residues coordinate Cu cation: H617, H619, and H621. The N-linked (GlcNAc...) asparagine glycan is linked to N635. The segment at residues 644 to 680 is a cross-link (lysine tyrosylquinone (Lys-Tyr)); sequence KASFCLEDSECEADIQKQYVCANFGEQGITVGCWDLY. 2',4',5'-topaquinone is present on Y680. Positions 713, 715, 718, and 719 each coordinate Ca(2+). A disulfide bond links C723 and C737.

It belongs to the lysyl oxidase family. Requires Cu cation as cofactor. It depends on lysine tyrosylquinone residue as a cofactor. The lysine tyrosylquinone cross-link (LTQ) is generated by condensation of the epsilon-amino group of a lysine with a topaquinone produced by oxidation of tyrosine.

The protein resides in the secreted. Its subcellular location is the extracellular space. It localises to the extracellular matrix. It is found in the basement membrane. The protein localises to the nucleus. The protein resides in the chromosome. Its subcellular location is the endoplasmic reticulum. The catalysed reaction is L-lysyl-[protein] + O2 + H2O = (S)-2-amino-6-oxohexanoyl-[protein] + H2O2 + NH4(+). Functionally, mediates the post-translational oxidative deamination of lysine residues on target proteins leading to the formation of deaminated lysine (allysine). Acts as a transcription corepressor and specifically mediates deamination of trimethylated 'Lys-4' of histone H3 (H3K4me3), a specific tag for epigenetic transcriptional activation. Shows no activity against histone H3 when it is trimethylated on 'Lys-9' (H3K9me3) or 'Lys-27' (H3K27me3) or when 'Lys-4' is monomethylated (H3K4me1) or dimethylated (H3K4me2). Also mediates deamination of methylated TAF10, a member of the transcription factor IID (TFIID) complex, which induces release of TAF10 from promoters, leading to inhibition of TFIID-dependent transcription. LOXL2-mediated deamination of TAF10 results in transcriptional repression of genes required for embryonic stem cell pluripotency. Involved in epithelial to mesenchymal transition (EMT) and participates in repression of E-cadherin, probably by mediating deamination of histone H3. When secreted into the extracellular matrix, promotes cross-linking of extracellular matrix proteins by mediating oxidative deamination of peptidyl lysine residues in precursors to fibrous collagen and elastin. Acts as a regulator of sprouting angiogenesis, probably via collagen IV scaffolding. Acts as a regulator of chondrocyte differentiation, probably by regulating expression of factors that control chondrocyte differentiation. This Xenopus laevis (African clawed frog) protein is Lysyl oxidase homolog 2 (loxl2).